The sequence spans 419 residues: Bilin biosynthesis protein CpeY (419 aa).

Functionally, involved in the biosynthesis of bilin. This is Bilin biosynthesis protein CpeY (cpeY) from Synechococcus sp. (strain WH8020).